Consider the following 406-residue polypeptide: Interactor protein for cytohesin exchange factors 1 (406 aa).

The PH domain maps to 13–112 (HADCQGWLYK…WLNKLGFAVT (100 aa)). Disordered stretches follow at residues 120-173 (DEEC…FSSL), 253-285 (SLNN…EDDE), and 383-406 (PQDP…ENSL). Acidic residues predominate over residues 123–134 (CYSESEQEDPEV). Over residues 144-153 (ASTTSSPVAA) the composition is skewed to low complexity. R164 is subject to Phosphoserine. Basic and acidic residues predominate over residues 272–285 (MADREEIKSSEDDE). Positions 392 to 406 (EVMNPTSSDCVENSL) are enriched in polar residues.

As to quaternary structure, interacts with guanine-nucleotide exchange factors PSCD1, PSCD2, PSCD3 and PSCD4.

It localises to the cytoplasm. The protein resides in the cell membrane. Enhances the promotion of guanine-nucleotide exchange by PSCD2 on ARF6 in a concentration-dependent manner. The sequence is that of Interactor protein for cytohesin exchange factors 1 (Ipcef1) from Mus musculus (Mouse).